The following is a 286-amino-acid chain: uncharacterized protein (286 aa).

In terms of domain architecture, AB hydrolase-1 spans 26 to 268 (PLIILCHGFC…DACHYDIYEG (243 aa)).

This sequence belongs to the AB hydrolase superfamily.

This is an uncharacterized protein from Escherichia coli.